The following is a 431-amino-acid chain: Adenylosuccinate synthetase (431 aa).

Residues 12 to 18 (GDEGKGK) and 40 to 42 (GHT) contribute to the GTP site. The active-site Proton acceptor is Asp13. Mg(2+)-binding residues include Asp13 and Gly40. IMP-binding positions include 13–16 (DEGK), 38–41 (NAGH), Thr129, Arg143, Gln224, Thr239, and Arg303. His41 functions as the Proton donor in the catalytic mechanism. 299 to 305 (VTTGRAR) serves as a coordination point for substrate. Residues Arg305, 331-333 (KLD), and 413-415 (GVG) contribute to the GTP site.

The protein belongs to the adenylosuccinate synthetase family. As to quaternary structure, homodimer. The cofactor is Mg(2+).

The protein resides in the cytoplasm. The catalysed reaction is IMP + L-aspartate + GTP = N(6)-(1,2-dicarboxyethyl)-AMP + GDP + phosphate + 2 H(+). Its pathway is purine metabolism; AMP biosynthesis via de novo pathway; AMP from IMP: step 1/2. In terms of biological role, plays an important role in the de novo pathway of purine nucleotide biosynthesis. Catalyzes the first committed step in the biosynthesis of AMP from IMP. This is Adenylosuccinate synthetase from Mycolicibacterium vanbaalenii (strain DSM 7251 / JCM 13017 / BCRC 16820 / KCTC 9966 / NRRL B-24157 / PYR-1) (Mycobacterium vanbaalenii).